We begin with the raw amino-acid sequence, 210 residues long: MTSRMAILSGLLFWLLLEWNPAFAYSPRTPDRVSETDIQRLLHGVMEQLGIARPRVEYPAHQAMNLVGPQSIEGGAHEGLQHLGPFGNIPNIVAELTGDNIPKDFSEDQGYPDPPNPCPLGKTADDGCLENAPDTAEFSREFQLDQHLFDPEHDYPGLGKWNKKLLYEKMKGGQRRKRRSVNPYLQGKRLDNVVAKKSVPHFSEEEKEPE.

The first 24 residues, 1–24 (MTSRMAILSGLLFWLLLEWNPAFA), serve as a signal peptide directing secretion. Cysteine 118 and cysteine 128 are disulfide-bonded. Phosphoserine is present on residues serine 139 and serine 203.

It belongs to the 7B2 family. As to quaternary structure, interacts with PCSK2/PC2 early in the secretory pathway. Dissociation occurs at later stages. Post-translationally, proteolytically cleaved in the Golgi by a furin-like convertase to generate bioactive peptides. In terms of processing, sulfated on tyrosine residues.

The protein localises to the secreted. Acts as a molecular chaperone for PCSK2/PC2, preventing its premature activation in the regulated secretory pathway. Binds to inactive PCSK2 in the endoplasmic reticulum and facilitates its transport from there to later compartments of the secretory pathway where it is proteolytically matured and activated. Also required for cleavage of PCSK2 but does not appear to be involved in its folding. Plays a role in regulating pituitary hormone secretion. The C-terminal peptide inhibits PCSK2 in vitro. In Rattus norvegicus (Rat), this protein is Neuroendocrine protein 7B2 (Scg5).